Consider the following 336-residue polypeptide: 4-hydroxy-3-methylbut-2-enyl diphosphate reductase (336 aa).

Residues Met1–Thr23 form a disordered region. Cys36 serves as a coordination point for [4Fe-4S] cluster. 2 residues coordinate (2E)-4-hydroxy-3-methylbut-2-enyl diphosphate: His65 and His98. Dimethylallyl diphosphate-binding residues include His65 and His98. Isopentenyl diphosphate contacts are provided by His65 and His98. Cys120 lines the [4Fe-4S] cluster pocket. His148 is a binding site for (2E)-4-hydroxy-3-methylbut-2-enyl diphosphate. His148 is a dimethylallyl diphosphate binding site. Position 148 (His148) interacts with isopentenyl diphosphate. The active-site Proton donor is the Glu150. Residue Thr190 coordinates (2E)-4-hydroxy-3-methylbut-2-enyl diphosphate. A [4Fe-4S] cluster-binding site is contributed by Cys220. (2E)-4-hydroxy-3-methylbut-2-enyl diphosphate contacts are provided by Ser248, Ser249, Asn250, and Ser293. Dimethylallyl diphosphate is bound by residues Ser248, Ser249, Asn250, and Ser293. Residues Ser248, Ser249, Asn250, and Ser293 each contribute to the isopentenyl diphosphate site.

This sequence belongs to the IspH family. The cofactor is [4Fe-4S] cluster.

The enzyme catalyses isopentenyl diphosphate + 2 oxidized [2Fe-2S]-[ferredoxin] + H2O = (2E)-4-hydroxy-3-methylbut-2-enyl diphosphate + 2 reduced [2Fe-2S]-[ferredoxin] + 2 H(+). It catalyses the reaction dimethylallyl diphosphate + 2 oxidized [2Fe-2S]-[ferredoxin] + H2O = (2E)-4-hydroxy-3-methylbut-2-enyl diphosphate + 2 reduced [2Fe-2S]-[ferredoxin] + 2 H(+). It participates in isoprenoid biosynthesis; dimethylallyl diphosphate biosynthesis; dimethylallyl diphosphate from (2E)-4-hydroxy-3-methylbutenyl diphosphate: step 1/1. The protein operates within isoprenoid biosynthesis; isopentenyl diphosphate biosynthesis via DXP pathway; isopentenyl diphosphate from 1-deoxy-D-xylulose 5-phosphate: step 6/6. Its function is as follows. Catalyzes the conversion of 1-hydroxy-2-methyl-2-(E)-butenyl 4-diphosphate (HMBPP) into a mixture of isopentenyl diphosphate (IPP) and dimethylallyl diphosphate (DMAPP). Acts in the terminal step of the DOXP/MEP pathway for isoprenoid precursor biosynthesis. This chain is 4-hydroxy-3-methylbut-2-enyl diphosphate reductase, found in Corynebacterium efficiens (strain DSM 44549 / YS-314 / AJ 12310 / JCM 11189 / NBRC 100395).